We begin with the raw amino-acid sequence, 1940 residues long: Myosin-1B (1940 aa).

The Myosin N-terminal SH3-like domain maps to 33–82 (DAKSSVFVVHAKESYVKSTIQSKESGKVTVKTEGGETLTVKEDQIFSMNP). A Myosin motor domain is found at 86–783 (DKIEDMAMMT…LLGLLEEMRD (698 aa)). Lys130 carries the post-translational modification N6,N6,N6-trimethyllysine. 179–186 (GESGAGKT) contacts ATP. 2 actin-binding regions span residues 660–682 (LNKLMSNLRSTHPHFVRCLIPNE) and 762–776 (KFGHTKVFFKAGLLG). One can recognise an IQ domain in the interval 786–815 (LAQLITRTQARCRGFLMRVEFKKMMERRES). The stretch at 844–1940 (LLKSAESEKE…EIGKKAESEE (1097 aa)) forms a coiled coil. A disordered region spans residues 1912-1940 (EERADIAESQVNKLRAKSREIGKKAESEE). Residues 1928-1940 (KSREIGKKAESEE) show a composition bias toward basic and acidic residues.

It belongs to the TRAFAC class myosin-kinesin ATPase superfamily. Myosin family. Muscle myosin is a hexameric protein that consists of 2 heavy chain subunits (MHC), 2 alkali light chain subunits (MLC) and 2 regulatory light chain subunits (MLC-2).

Its subcellular location is the cytoplasm. The protein localises to the myofibril. Muscle contraction. This chain is Myosin-1B (MYH1B), found in Gallus gallus (Chicken).